A 321-amino-acid chain; its full sequence is Fe-S cluster assembly protein DRE2 (321 aa).

The N-terminal SAM-like domain stretch occupies residues 1-131 (MERMLLLSPP…KPDFGPENIV (131 aa)). Residues 132–213 (PLKLGKRKPV…EETLLDGEDM (82 aa)) are linker. The [2Fe-2S] cluster site is built by Cys-223, Cys-234, Cys-237, and Cys-239. The tract at residues 223–239 (CRPKAGKRRRACKDCTC) is fe-S binding site A. [4Fe-4S] cluster is bound by residues Cys-284, Cys-287, Cys-295, and Cys-298. Short sequence motifs (cx2C motif) lie at residues 284–287 (CGNC) and 295–298 (CDGC). Residues 284–298 (CGNCALGDAFRCDGC) are fe-S binding site B.

This sequence belongs to the anamorsin family. As to quaternary structure, monomer. Interacts with TAH18. Interacts with MIA40. It depends on [2Fe-2S] cluster as a cofactor. The cofactor is [4Fe-4S] cluster.

It localises to the cytoplasm. The protein localises to the mitochondrion intermembrane space. Component of the cytosolic iron-sulfur (Fe-S) protein assembly (CIA) machinery required for the maturation of extramitochondrial Fe-S proteins. Part of an electron transfer chain functioning in an early step of cytosolic Fe-S biogenesis, facilitating the de novo assembly of a [4Fe-4S] cluster on the scaffold complex CFD1-NBP35. Electrons are transferred to DRE2 from NADPH via the FAD- and FMN-containing protein TAH18. TAH18-DRE2 are also required for the assembly of the diferric tyrosyl radical cofactor of ribonucleotide reductase (RNR), probably by providing electrons for reduction during radical cofactor maturation in the catalytic small subunit RNR2. This chain is Fe-S cluster assembly protein DRE2, found in Coccidioides immitis (strain RS) (Valley fever fungus).